The sequence spans 566 residues: 3-oxosteroid 1-dehydrogenase (566 aa).

Position 10–39 (10–39) interacts with FAD; that stretch reads DVVVVGSGAAGMVAALVAAHRGLSTVVVEK.

It belongs to the FAD-dependent oxidoreductase 2 family. 3-oxosteroid dehydrogenase subfamily. FAD serves as cofactor.

The catalysed reaction is a 3-oxosteroid + A = a 3-oxo-Delta(1)-steroid + AH2. It carries out the reaction a 3-oxo-Delta(4)-steroid + A = a 3-oxo-Delta(1,4)-steroid + AH2. Functionally, involved in the degradation of cholesterol. Catalyzes the elimination of the C-1 and C-2 hydrogen atoms of the A-ring from the polycyclic ring structure of 3-ketosteroids. Is also involved in the formation of 3-keto-1,4-diene-steroid from 3-keto-4-ene-steroid. This is 3-oxosteroid 1-dehydrogenase (kstD) from Mycobacterium tuberculosis (strain CDC 1551 / Oshkosh).